Consider the following 228-residue polypeptide: MALRTLVSRRTLATGLGFRQQLRGLQTFSLPDLPYDYGALEPAISGDIMQLHHQNHHQTYVTNYNKALEQLHDAISKGDAPTVAKLHSAIKFNGGGHINHSIFWKNLAPVREGGGEPPKGSLGWAIDTNFGSLEALVQKMNAEGAALQGSGWVWLGVDKELKRLVIETTANQDPLVSKGANLVPLLGIDVWEHAYYLQYKNVRPDYLKNIWKVMNWKYANEVYEKECP.

The transit peptide at 1 to 24 (MALRTLVSRRTLATGLGFRQQLRG) directs the protein to the mitochondrion. H52, H100, D189, and H193 together coordinate Mn(2+).

This sequence belongs to the iron/manganese superoxide dismutase family. In terms of assembly, homotetramer. Mn(2+) is required as a cofactor.

It localises to the mitochondrion matrix. The enzyme catalyses 2 superoxide + 2 H(+) = H2O2 + O2. In terms of biological role, destroys superoxide anion radicals which are normally produced within the cells and which are toxic to biological systems. In Nicotiana plumbaginifolia (Leadwort-leaved tobacco), this protein is Superoxide dismutase [Mn], mitochondrial (SODA).